The sequence spans 337 residues: Follistatin (337 aa).

An N-terminal signal peptide occupies residues proline 1–alanine 22. In terms of domain architecture, TB spans glycine 23 to glycine 96. Intrachain disulfides connect cysteine 25-cysteine 48, cysteine 35-cysteine 81, cysteine 49-cysteine 84, cysteine 88-cysteine 99, cysteine 93-cysteine 109, cysteine 111-cysteine 143, cysteine 115-cysteine 136, cysteine 125-cysteine 157, cysteine 161-cysteine 172, cysteine 166-cysteine 182, cysteine 185-cysteine 218, cysteine 189-cysteine 211, cysteine 200-cysteine 232, cysteine 238-cysteine 249, cysteine 243-cysteine 260, cysteine 263-cysteine 295, cysteine 267-cysteine 288, and cysteine 277-cysteine 309. Residues threonine 87 to valine 110 enclose the Follistatin-like 1 domain. The region spanning asparagine 105–lysine 159 is the Kazal-like 1 domain. A glycan (N-linked (GlcNAc...) asparagine) is linked at asparagine 117. One can recognise a Follistatin-like 2 domain in the interval threonine 160 to valine 183. Residues asparagine 179 to lysine 234 enclose the Kazal-like 2 domain. A Follistatin-like 3 domain is found at serine 237–serine 261. The 58-residue stretch at lysine 254–serine 311 folds into the Kazal-like 3 domain. Asparagine 281 carries an N-linked (GlcNAc...) asparagine glycan. Positions cysteine 309 to tryptophan 337 are disordered. Acidic residues predominate over residues glutamate 314–aspartate 326.

As to quaternary structure, monomer.

It is found in the secreted. Binds directly to activin and functions as an activin antagonist. Specific inhibitor of the biosynthesis and secretion of pituitary follicle stimulating hormone (FSH). This is Follistatin from Ovis aries (Sheep).